A 206-amino-acid polypeptide reads, in one-letter code: Thiamine-phosphate synthase (206 aa).

Residues 38 to 42 (QLRAK) and asparagine 70 each bind 4-amino-2-methyl-5-(diphosphooxymethyl)pyrimidine. Aspartate 71 and aspartate 90 together coordinate Mg(2+). Residue serine 107 participates in 4-amino-2-methyl-5-(diphosphooxymethyl)pyrimidine binding. 133–135 (TTT) provides a ligand contact to 2-[(2R,5Z)-2-carboxy-4-methylthiazol-5(2H)-ylidene]ethyl phosphate. Lysine 136 contributes to the 4-amino-2-methyl-5-(diphosphooxymethyl)pyrimidine binding site. Residues glycine 164 and 184-185 (VS) each bind 2-[(2R,5Z)-2-carboxy-4-methylthiazol-5(2H)-ylidene]ethyl phosphate.

It belongs to the thiamine-phosphate synthase family. The cofactor is Mg(2+).

The catalysed reaction is 2-[(2R,5Z)-2-carboxy-4-methylthiazol-5(2H)-ylidene]ethyl phosphate + 4-amino-2-methyl-5-(diphosphooxymethyl)pyrimidine + 2 H(+) = thiamine phosphate + CO2 + diphosphate. The enzyme catalyses 2-(2-carboxy-4-methylthiazol-5-yl)ethyl phosphate + 4-amino-2-methyl-5-(diphosphooxymethyl)pyrimidine + 2 H(+) = thiamine phosphate + CO2 + diphosphate. It catalyses the reaction 4-methyl-5-(2-phosphooxyethyl)-thiazole + 4-amino-2-methyl-5-(diphosphooxymethyl)pyrimidine + H(+) = thiamine phosphate + diphosphate. Its pathway is cofactor biosynthesis; thiamine diphosphate biosynthesis; thiamine phosphate from 4-amino-2-methyl-5-diphosphomethylpyrimidine and 4-methyl-5-(2-phosphoethyl)-thiazole: step 1/1. Its function is as follows. Condenses 4-methyl-5-(beta-hydroxyethyl)thiazole monophosphate (THZ-P) and 2-methyl-4-amino-5-hydroxymethyl pyrimidine pyrophosphate (HMP-PP) to form thiamine monophosphate (TMP). This chain is Thiamine-phosphate synthase, found in Herpetosiphon aurantiacus (strain ATCC 23779 / DSM 785 / 114-95).